The following is a 396-amino-acid chain: Gap junction gamma-1 protein (396 aa).

Residues Met-1–Lys-22 are Cytoplasmic-facing. A helical membrane pass occupies residues Ile-23 to Tyr-45. The Extracellular portion of the chain corresponds to Asp-46–Arg-75. Residues Phe-76–Ala-95 form a helical membrane-spanning segment. At Ile-96–Lys-175 the chain is on the cytoplasmic side. Residues Leu-146–Arg-165 form a disordered region. Residues Glu-147–Asn-156 are compositionally biased toward basic and acidic residues. The chain crosses the membrane as a helical span at residues Ile-176–Leu-198. Residues Tyr-199–Lys-228 lie on the Extracellular side of the membrane. The chain crosses the membrane as a helical span at residues Thr-229–Trp-248. Residues Glu-249–Ile-396 lie on the Cytoplasmic side of the membrane. Positions Tyr-356–Ile-396 are disordered. The segment covering Gly-373–Ile-396 has biased composition (low complexity).

It belongs to the connexin family. Gamma-type subfamily. As to quaternary structure, a connexon is composed of a hexamer of connexins. Interacts with CNST.

It localises to the cell membrane. The protein resides in the cell junction. It is found in the gap junction. One gap junction consists of a cluster of closely packed pairs of transmembrane channels, the connexons, through which materials of low MW diffuse from one cell to a neighboring cell. The chain is Gap junction gamma-1 protein (GJC1) from Bos taurus (Bovine).